Reading from the N-terminus, the 396-residue chain is Elongation factor Tu 2 (396 aa).

The tr-type G domain maps to 10 to 206 (KPHVNVGTIG…ALDTYIPTPE (197 aa)). Residues 19–26 (GHVDHGKT) are G1. Residue 19-26 (GHVDHGKT) coordinates GTP. Thr-26 lines the Mg(2+) pocket. The interval 60–64 (GITIN) is G2. The interval 81–84 (DCPG) is G3. Residues 81–85 (DCPGH) and 136–139 (NKAD) each bind GTP. The G4 stretch occupies residues 136–139 (NKAD). The G5 stretch occupies residues 174-176 (SAK).

It belongs to the TRAFAC class translation factor GTPase superfamily. Classic translation factor GTPase family. EF-Tu/EF-1A subfamily. In terms of assembly, monomer.

Its subcellular location is the cytoplasm. It catalyses the reaction GTP + H2O = GDP + phosphate + H(+). Its function is as follows. GTP hydrolase that promotes the GTP-dependent binding of aminoacyl-tRNA to the A-site of ribosomes during protein biosynthesis. This is Elongation factor Tu 2 from Methylobacillus flagellatus (strain ATCC 51484 / DSM 6875 / VKM B-1610 / KT).